The following is a 167-amino-acid chain: V-type proton ATPase subunit c' (167 aa).

The Lumenal segment spans residues 1–13 (MAEIMADSELAPK). A helical membrane pass occupies residues 14–34 (FAPFIGMAGIAAAMIFGSAGA). The Cytoplasmic portion of the chain corresponds to 35–59 (AYGTAKSGIGIAGVGTFRPDLIMKC). The helical transmembrane segment at 60-80 (LIPVVMSGIIAVYALVVAVLI) threads the bilayer. Residues 81-101 (AQDLGPPGSGQHYSLFNGFMH) lie on the Lumenal side of the membrane. The chain crosses the membrane as a helical span at residues 102 to 122 (LACGLSVGLTGLAAGYCIGIV). At 123-140 (GDKGVRSFMLQSRIFVGM) the chain is on the cytoplasmic side. A helical transmembrane segment spans residues 141–161 (VLILIFGEVLGLYGLIVALIL). Topologically, residues 162–167 (NTKSKG) are lumenal.

It belongs to the V-ATPase proteolipid subunit family. In terms of assembly, V-ATPase is a heteromultimeric enzyme composed of a peripheral catalytic V1 complex (components A to H) attached to an integral membrane V0 proton pore complex (components: a, c, c', c'', d, e, f and VOA1). The decameric c-ring forms the proton-conducting pore, and is composed of eight proteolipid subunits c, one subunit c' and one subunit c''.

It localises to the vacuole membrane. Its function is as follows. Proton-conducting pore forming subunit of the V0 complex of vacuolar(H+)-ATPase (V-ATPase), a multisubunit enzyme composed of a peripheral complex (V1) that hydrolyzes ATP and a membrane integral complex (V0) that translocates protons. V-ATPase is responsible for acidifying and maintaining the pH of intracellular compartments. In Neurospora crassa (strain ATCC 24698 / 74-OR23-1A / CBS 708.71 / DSM 1257 / FGSC 987), this protein is V-type proton ATPase subunit c' (vma-11).